Consider the following 342-residue polypeptide: N-acetyl-gamma-glutamyl-phosphate reductase (342 aa).

Cys-149 is a catalytic residue.

The protein belongs to the NAGSA dehydrogenase family. Type 1 subfamily.

Its subcellular location is the cytoplasm. The catalysed reaction is N-acetyl-L-glutamate 5-semialdehyde + phosphate + NADP(+) = N-acetyl-L-glutamyl 5-phosphate + NADPH + H(+). It functions in the pathway amino-acid biosynthesis; L-arginine biosynthesis; N(2)-acetyl-L-ornithine from L-glutamate: step 3/4. Its function is as follows. Catalyzes the NADPH-dependent reduction of N-acetyl-5-glutamyl phosphate to yield N-acetyl-L-glutamate 5-semialdehyde. This chain is N-acetyl-gamma-glutamyl-phosphate reductase, found in Paracoccus denitrificans (strain Pd 1222).